The following is a 217-amino-acid chain: TPA-induced transmembrane protein (217 aa).

Residues 1–37 (MDLAQPSQPVDELELSVLERQPEENTPLNGADKVFPS) are disordered. The chain crosses the membrane as a helical span at residues 66–86 (LWMIITSIFLGVITVIIIGLC).

Interacts with LIPH. As to expression, detected predominantly in the skin, with strongest expression in the inner root sheath of the hair follicle.

The protein localises to the endoplasmic reticulum. The protein resides in the cell membrane. In terms of biological role, has a role in LIPH-mediated synthesis of 2-acyl lysophosphatidic acid (LPA). LPA is a bioactive lipid mediator involved in different biological processes, and necessary to promote hair formation and growth. The protein is TPA-induced transmembrane protein (TTMP) of Homo sapiens (Human).